Consider the following 372-residue polypeptide: Dual-specificity RNA methyltransferase RlmN (372 aa).

The Proton acceptor role is filled by glutamate 92. The 240-residue stretch at 98 to 337 (ETDRATLCVS…VILRKTRGDD (240 aa)) folds into the Radical SAM core domain. Cysteine 105 and cysteine 342 are disulfide-bonded. 3 residues coordinate [4Fe-4S] cluster: cysteine 112, cysteine 116, and cysteine 119. S-adenosyl-L-methionine-binding positions include 166–167 (GE), serine 198, 220–222 (SLH), and asparagine 299. The S-methylcysteine intermediate role is filled by cysteine 342.

The protein belongs to the radical SAM superfamily. RlmN family. The cofactor is [4Fe-4S] cluster.

The protein resides in the cytoplasm. It carries out the reaction adenosine(2503) in 23S rRNA + 2 reduced [2Fe-2S]-[ferredoxin] + 2 S-adenosyl-L-methionine = 2-methyladenosine(2503) in 23S rRNA + 5'-deoxyadenosine + L-methionine + 2 oxidized [2Fe-2S]-[ferredoxin] + S-adenosyl-L-homocysteine. The enzyme catalyses adenosine(37) in tRNA + 2 reduced [2Fe-2S]-[ferredoxin] + 2 S-adenosyl-L-methionine = 2-methyladenosine(37) in tRNA + 5'-deoxyadenosine + L-methionine + 2 oxidized [2Fe-2S]-[ferredoxin] + S-adenosyl-L-homocysteine. Specifically methylates position 2 of adenine 2503 in 23S rRNA and position 2 of adenine 37 in tRNAs. m2A2503 modification seems to play a crucial role in the proofreading step occurring at the peptidyl transferase center and thus would serve to optimize ribosomal fidelity. This Histophilus somni (strain 129Pt) (Haemophilus somnus) protein is Dual-specificity RNA methyltransferase RlmN.